The primary structure comprises 197 residues: MSEMLNHVASCRLPTEWGVFTMHGFEEANGQEHVALTVGNFSDGNPVLTRIHSECLTGDALFSRKCDCGPQLEAAMRAVQTEGRGIIVYLRQEGRGIGLINKIRAYHLQDQGMDTVEANLALGLPVDARDFRLAQSIYEYLGIRSVKLLTNNPEKIQTLKDAGINVVERIPLHVGENLENKRYLQTKADKLGHLMSE.

50 to 54 (RIHSE) provides a ligand contact to GTP. Zn(2+) is bound by residues cysteine 55, cysteine 66, and cysteine 68. GTP is bound by residues glutamine 71, 93–95 (EGR), and threonine 115. Catalysis depends on aspartate 127, which acts as the Proton acceptor. Residue arginine 129 is the Nucleophile of the active site. Residues threonine 150 and lysine 155 each coordinate GTP.

Belongs to the GTP cyclohydrolase II family. It depends on Zn(2+) as a cofactor.

The enzyme catalyses GTP + 4 H2O = 2,5-diamino-6-hydroxy-4-(5-phosphoribosylamino)-pyrimidine + formate + 2 phosphate + 3 H(+). Its pathway is cofactor biosynthesis; riboflavin biosynthesis; 5-amino-6-(D-ribitylamino)uracil from GTP: step 1/4. In terms of biological role, catalyzes the conversion of GTP to 2,5-diamino-6-ribosylamino-4(3H)-pyrimidinone 5'-phosphate (DARP), formate and pyrophosphate. The protein is GTP cyclohydrolase-2 of Neisseria meningitidis serogroup C (strain 053442).